Reading from the N-terminus, the 297-residue chain is Protein PecM (297 aa).

10 consecutive transmembrane segments (helical) span residues 6–26, 38–58, 60–80, 86–106, 116–136, 138–158, 167–187, 203–223, 231–251, and 261–281; these read FAFYAPCVWGTTYFVTTQFLP, ALPAGIILILGKNLPPVGWLW, LFVLGALNIGVFFVMLFFAAY, VVALVGSLQPLIVILLSFLLL, VAAVAGGIGIVLLISLPKAPL, PAGLVASALATMSMASGLVLT, MTMLTFTGWQLFCGGLVILPV, LAGYLYLAIPGSLLAYFMWFS, VIMSLLGFLSPLVALLLGFLF, and LVGVVFIFSALIIVQDISLFS. 2 EamA domains span residues 12–130 and 149–276; these read CVWG…LLIS and MSMA…IVQD.

It belongs to the EamA transporter family.

It is found in the cell membrane. Its function is as follows. Involved in pectinase, cellulase, and blue pigment regulation. This Dickeya dadantii (strain 3937) (Erwinia chrysanthemi (strain 3937)) protein is Protein PecM (pecM).